A 154-amino-acid chain; its full sequence is Transcriptional regulator MraZ (154 aa).

2 consecutive SpoVT-AbrB domains span residues 6 to 53 and 83 to 126; these read NSEA…PENV and VEVI…SKEI.

This sequence belongs to the MraZ family. Forms oligomers.

The protein localises to the cytoplasm. It is found in the nucleoid. The polypeptide is Transcriptional regulator MraZ (Phocaeicola vulgatus (strain ATCC 8482 / DSM 1447 / JCM 5826 / CCUG 4940 / NBRC 14291 / NCTC 11154) (Bacteroides vulgatus)).